Here is a 266-residue protein sequence, read N- to C-terminus: Undecaprenyl-diphosphatase (266 aa).

A run of 8 helical transmembrane segments spans residues methionine 1 to isoleucine 21, glutamine 39 to phenylalanine 59, tryptophan 87 to isoleucine 107, leucine 111 to alanine 131, alanine 149 to alanine 169, alanine 183 to valine 203, alanine 218 to leucine 238, and methionine 246 to leucine 266.

It belongs to the UppP family.

The protein localises to the cell inner membrane. It carries out the reaction di-trans,octa-cis-undecaprenyl diphosphate + H2O = di-trans,octa-cis-undecaprenyl phosphate + phosphate + H(+). Functionally, catalyzes the dephosphorylation of undecaprenyl diphosphate (UPP). Confers resistance to bacitracin. The protein is Undecaprenyl-diphosphatase of Shewanella sp. (strain MR-7).